The sequence spans 98 residues: NADH-ubiquinone oxidoreductase chain 4L (98 aa).

A run of 3 helical transmembrane segments spans residues 2-22, 29-49, and 61-81; these read PPIFTNVILAFATAFLGTLIF, SLLCLEGMMLSLFILSTLIIL, and ILLLVFAACEAAIGLALLVMV.

This sequence belongs to the complex I subunit 4L family. Core subunit of respiratory chain NADH dehydrogenase (Complex I) which is composed of 45 different subunits.

The protein localises to the mitochondrion inner membrane. It catalyses the reaction a ubiquinone + NADH + 5 H(+)(in) = a ubiquinol + NAD(+) + 4 H(+)(out). Its function is as follows. Core subunit of the mitochondrial membrane respiratory chain NADH dehydrogenase (Complex I) which catalyzes electron transfer from NADH through the respiratory chain, using ubiquinone as an electron acceptor. Part of the enzyme membrane arm which is embedded in the lipid bilayer and involved in proton translocation. The chain is NADH-ubiquinone oxidoreductase chain 4L (MT-ND4L) from Avahi occidentalis (Western woolly lemur).